The following is a 676-amino-acid chain: Phosphatidylinositol-3,5-bisphosphate 3-phosphatase MTMR6 (676 aa).

The Myotubularin phosphatase domain maps to 125 to 501 (GWRRLDWNSE…ARFTVWTAMY (377 aa)). Residues Asn249, Asn274, and Ile275 each coordinate a 1,2-diacyl-sn-glycero-3-phospho-(1D-myo-inositol-3,5-bisphosphate). A 1,2-diacyl-sn-glycero-3-phospho-(1D-myo-inositol-3-phosphate) contacts are provided by Asn249, Asn274, and Ile275. Residues 249 to 252 (NKVQ), 274 to 275 (NI), and 335 to 341 (CSDGWDR) each bind substrate. Cys335 functions as the Phosphocysteine intermediate in the catalytic mechanism. 8 residues coordinate a 1,2-diacyl-sn-glycero-3-phospho-(1D-myo-inositol-3,5-bisphosphate): Ser336, Asp337, Gly338, Trp339, Asp340, Arg341, Lys377, and Arg381. A 1,2-diacyl-sn-glycero-3-phospho-(1D-myo-inositol-3-phosphate) is bound by residues Ser336, Asp337, Gly338, Trp339, Asp340, and Arg341. Arg381 provides a ligand contact to a 1,2-diacyl-sn-glycero-3-phospho-(1D-myo-inositol-3-phosphate). Arg381 lines the substrate pocket. The FYVE-type zinc-finger motif lies at 618-675 (KWQPLRGADRCSNPACRGEFSSTIERRIHCHLCGMIFCRRCLKVSADERERVCDKCKT).

The protein belongs to the protein-tyrosine phosphatase family. Non-receptor class myotubularin subfamily. As to quaternary structure, heterodimer with mtm-9. Expressed in intestinal cells. Expressed in head neurons, pre-anal ganglion, hypodermal cells, anal depressor muscle and non-neuronal cells in the tail.

It is found in the cytoplasm. The protein resides in the membrane. It localises to the apical cell membrane. It catalyses the reaction a 1,2-diacyl-sn-glycero-3-phospho-(1D-myo-inositol-3,5-bisphosphate) + H2O = a 1,2-diacyl-sn-glycero-3-phospho-(1D-myo-inositol-5-phosphate) + phosphate. It carries out the reaction a 1,2-diacyl-sn-glycero-3-phospho-(1D-myo-inositol-3-phosphate) + H2O = a 1,2-diacyl-sn-glycero-3-phospho-(1D-myo-inositol) + phosphate. The catalysed reaction is 1,2-dioctanoyl-sn-glycero-3-phospho-(1D-myo-inositol-3,5-bisphosphate) + H2O = 1,2-dioctanoyl-sn-glycero-3-phospho-(1D-myo-inositol-5-phosphate) + phosphate. The enzyme catalyses 1,2-dioctanoyl-sn-glycero-3-phospho-(1-D-myo-inositol-3-phosphate) + H2O = 1,2-dioctanoyl-sn-glycero-3-phospho-(1D-myo-inositol) + phosphate. Functionally, probable lipid phosphatase that specifically dephosphorylates the D-3 position of phosphatidylinositol 3-phosphate and phosphatidylinositol 3,5-bisphosphate, generating phosphatidylinositol and phosphatidylinositol 5-phosphate. In association with mtm-9, plays a role in endosome trafficking probably by regulating phosphatidylinositol-3-phosphate levels. Regulates fluid phase endocytosis in coelomocytes. Controls the endosomal localization of sorting nexin snx-3 and the levels of sorting receptor mig-14. By regulating the retrograde transport of mig-14, may be involved in the secretion of Wnt ligands such as egl-20. Regulates posterior migration of QL neuroblast descendants and the anterior migration of QR neuroblast descendants and HSN neurons during larval development. Involved in the formation of correct synapse number in DA9 motor neurons probably in part by regulating the secretion of Wnt ligand egl-20. The protein is Phosphatidylinositol-3,5-bisphosphate 3-phosphatase MTMR6 of Caenorhabditis elegans.